The chain runs to 72 residues: Conotoxin TxMMSK-04 (72 aa).

The N-terminal stretch at 1-20 is a signal peptide; it reads MMSKLGVLLTICLLLFPLTA. A propeptide spanning residues 21 to 51 is cleaved from the precursor; it reads VPLDGDQPADRPAERMQDGISSEHHPFFDSV. Gln55 is modified (pyrrolidone carboxylic acid). 3 cysteine pairs are disulfide-bonded: Cys57–Cys71, Cys58–Cys67, and Cys63–Cys70. Position 69 is a 4-hydroxyproline (Pro69). Cys71 is modified (cysteine amide).

The protein belongs to the conotoxin M superfamily. In terms of tissue distribution, expressed by the venom duct.

It localises to the secreted. The sequence is that of Conotoxin TxMMSK-04 from Conus textile (Cloth-of-gold cone).